Here is a 324-residue protein sequence, read N- to C-terminus: Quinolinate synthase (324 aa).

Positions 39 and 56 each coordinate iminosuccinate. Cysteine 101 is a binding site for [4Fe-4S] cluster. Residues 127 to 129 and serine 144 contribute to the iminosuccinate site; that span reads YIN. Cysteine 187 contributes to the [4Fe-4S] cluster binding site. Iminosuccinate-binding positions include 213–215 and threonine 230; that span reads HPE. Residue cysteine 280 participates in [4Fe-4S] cluster binding.

This sequence belongs to the quinolinate synthase family. Type 2 subfamily. It depends on [4Fe-4S] cluster as a cofactor.

Its subcellular location is the cytoplasm. It carries out the reaction iminosuccinate + dihydroxyacetone phosphate = quinolinate + phosphate + 2 H2O + H(+). The protein operates within cofactor biosynthesis; NAD(+) biosynthesis; quinolinate from iminoaspartate: step 1/1. In terms of biological role, catalyzes the condensation of iminoaspartate with dihydroxyacetone phosphate to form quinolinate. In Nostoc punctiforme (strain ATCC 29133 / PCC 73102), this protein is Quinolinate synthase.